We begin with the raw amino-acid sequence, 61 residues long: Large ribosomal subunit protein eL37 (61 aa).

Positions 18, 21, 33, and 36 each coordinate Zn(2+). The C4-type zinc-finger motif lies at 18–36 (CRRCGRNAYNPTKKYCASC).

This sequence belongs to the eukaryotic ribosomal protein eL37 family. Requires Zn(2+) as cofactor.

Binds to the 23S rRNA. The polypeptide is Large ribosomal subunit protein eL37 (Methanosphaera stadtmanae (strain ATCC 43021 / DSM 3091 / JCM 11832 / MCB-3)).